The following is a 339-amino-acid chain: Dual specificity protein phosphatase 12 (339 aa).

Met-1 bears the N-acetylmethionine mark. Positions 1-25 are disordered; that stretch reads MLEAQGSNHGCERQAPTASPASSAG. A Tyrosine-protein phosphatase domain is found at 26–170; sequence HAVEVRPGLY…LKLYEAMGYE (145 aa). The active-site Phosphocysteine intermediate is the Cys-114. A substrate-binding site is contributed by 115–120; sequence HAGVSR. Ser-334 bears the Phosphoserine mark.

This sequence belongs to the protein-tyrosine phosphatase family. Non-receptor class dual specificity subfamily. In terms of assembly, monomer. Zn(2+) is required as a cofactor.

It localises to the nucleus. The protein localises to the cytoplasm. It is found in the cytosol. The catalysed reaction is O-phospho-L-tyrosyl-[protein] + H2O = L-tyrosyl-[protein] + phosphate. It catalyses the reaction O-phospho-L-seryl-[protein] + H2O = L-seryl-[protein] + phosphate. The enzyme catalyses O-phospho-L-threonyl-[protein] + H2O = L-threonyl-[protein] + phosphate. Functionally, dual specificity phosphatase; can dephosphorylate both phosphotyrosine and phosphoserine or phosphothreonine residues. Can dephosphorylate glucokinase (in vitro). Has phosphatase activity with the synthetic substrate 6,8-difluoro-4-methylumbelliferyl phosphate and other in vitro substrates. The chain is Dual specificity protein phosphatase 12 (Dusp12) from Mus musculus (Mouse).